Here is a 342-residue protein sequence, read N- to C-terminus: Isopentenyl-diphosphate delta-isomerase (342 aa).

Substrate is bound at residue 11–12 (RK). FMN is bound by residues S68, 69–71 (SMT), S99, and N128. 99–101 (SQR) contributes to the substrate binding site. Q162 is a binding site for substrate. E163 provides a ligand contact to Mg(2+). Residues K194, S219, T224, 275–277 (GVR), and 296–297 (AK) contribute to the FMN site.

This sequence belongs to the IPP isomerase type 2 family. In terms of assembly, homooctamer. Dimer of tetramers. FMN serves as cofactor. Requires NADPH as cofactor. It depends on Mg(2+) as a cofactor.

It localises to the cytoplasm. The catalysed reaction is isopentenyl diphosphate = dimethylallyl diphosphate. Its function is as follows. Involved in the biosynthesis of isoprenoids. Catalyzes the 1,3-allylic rearrangement of the homoallylic substrate isopentenyl (IPP) to its allylic isomer, dimethylallyl diphosphate (DMAPP). This Legionella pneumophila (strain Corby) protein is Isopentenyl-diphosphate delta-isomerase.